The following is a 310-amino-acid chain: Homeobox protein dsc-1 (310 aa).

The segment at residues 180-239 (RRRFRTNFTELQSTFLEDSFKESHYPDHKAKKYMADFLKIPEDRITVWFQNRRAKWRRKE) is a DNA-binding region (homeobox). The interval 262–310 (CFSAQHPDDGPNAKHPNSFGIPNQPMSLDQFPMNTEQDFPEFPSLQEHQ) is disordered. The segment covering 281 to 298 (GIPNQPMSLDQFPMNTEQ) has biased composition (polar residues).

Expressed in the bilateral sensory neurons AWA, AWB, AWC, ASE, FLP and PVD. Also expressed in the enteric intestinal and anal depressor muscles.

It localises to the nucleus. It is found in the cell projection. The protein localises to the axon. Its subcellular location is the cytoplasm. Functionally, transcriptional regulator which plays a role in the expulsion step of defecation by controlling enteric muscle-specific expression of exp-1 which is required for enteric muscle contraction. Not required for exp-1 expression in the PDA neuron. Also involved in controlling the length of the defecation cycle. The protein is Homeobox protein dsc-1 of Caenorhabditis elegans.